The sequence spans 312 residues: Methionyl-tRNA formyltransferase (312 aa).

110–113 (SLLP) contributes to the (6S)-5,6,7,8-tetrahydrofolate binding site.

Belongs to the Fmt family.

It catalyses the reaction L-methionyl-tRNA(fMet) + (6R)-10-formyltetrahydrofolate = N-formyl-L-methionyl-tRNA(fMet) + (6S)-5,6,7,8-tetrahydrofolate + H(+). Functionally, attaches a formyl group to the free amino group of methionyl-tRNA(fMet). The formyl group appears to play a dual role in the initiator identity of N-formylmethionyl-tRNA by promoting its recognition by IF2 and preventing the misappropriation of this tRNA by the elongation apparatus. This Streptococcus suis (strain 05ZYH33) protein is Methionyl-tRNA formyltransferase.